The sequence spans 180 residues: Oligoribonuclease (180 aa).

Positions 7 to 170 (LIWIDLEMTG…DDIRDSINEL (164 aa)) constitute an Exonuclease domain. Y128 is an active-site residue.

It belongs to the oligoribonuclease family.

The protein localises to the cytoplasm. Functionally, 3'-to-5' exoribonuclease specific for small oligoribonucleotides. The protein is Oligoribonuclease of Marinobacter nauticus (strain ATCC 700491 / DSM 11845 / VT8) (Marinobacter aquaeolei).